A 164-amino-acid polypeptide reads, in one-letter code: Large ribosomal subunit protein uL10 (164 aa).

Belongs to the universal ribosomal protein uL10 family. In terms of assembly, part of the ribosomal stalk of the 50S ribosomal subunit. The N-terminus interacts with L11 and the large rRNA to form the base of the stalk. The C-terminus forms an elongated spine to which L12 dimers bind in a sequential fashion forming a multimeric L10(L12)X complex.

In terms of biological role, forms part of the ribosomal stalk, playing a central role in the interaction of the ribosome with GTP-bound translation factors. The chain is Large ribosomal subunit protein uL10 from Helicobacter pylori (strain HPAG1).